Consider the following 888-residue polypeptide: Phosphoenolpyruvate carboxylase (888 aa).

Catalysis depends on residues H144 and K553.

Belongs to the PEPCase type 1 family. The cofactor is Mg(2+).

It catalyses the reaction oxaloacetate + phosphate = phosphoenolpyruvate + hydrogencarbonate. In terms of biological role, forms oxaloacetate, a four-carbon dicarboxylic acid source for the tricarboxylic acid cycle. The protein is Phosphoenolpyruvate carboxylase of Alcanivorax borkumensis (strain ATCC 700651 / DSM 11573 / NCIMB 13689 / SK2).